A 334-amino-acid polypeptide reads, in one-letter code: Porphobilinogen deaminase (334 aa).

Residue Cys255 is modified to S-(dipyrrolylmethanemethyl)cysteine.

The protein belongs to the HMBS family. In terms of assembly, monomer. It depends on dipyrromethane as a cofactor.

It carries out the reaction 4 porphobilinogen + H2O = hydroxymethylbilane + 4 NH4(+). It participates in porphyrin-containing compound metabolism; protoporphyrin-IX biosynthesis; coproporphyrinogen-III from 5-aminolevulinate: step 2/4. Its function is as follows. Tetrapolymerization of the monopyrrole PBG into the hydroxymethylbilane pre-uroporphyrinogen in several discrete steps. The polypeptide is Porphobilinogen deaminase (Burkholderia orbicola (strain MC0-3)).